Reading from the N-terminus, the 78-residue chain is Exodeoxyribonuclease 7 small subunit (78 aa).

It belongs to the XseB family. In terms of assembly, heterooligomer composed of large and small subunits.

The protein resides in the cytoplasm. It carries out the reaction Exonucleolytic cleavage in either 5'- to 3'- or 3'- to 5'-direction to yield nucleoside 5'-phosphates.. In terms of biological role, bidirectionally degrades single-stranded DNA into large acid-insoluble oligonucleotides, which are then degraded further into small acid-soluble oligonucleotides. The chain is Exodeoxyribonuclease 7 small subunit from Idiomarina loihiensis (strain ATCC BAA-735 / DSM 15497 / L2-TR).